Reading from the N-terminus, the 318-residue chain is Methionyl-tRNA formyltransferase (318 aa).

120 to 123 (SLLP) provides a ligand contact to (6S)-5,6,7,8-tetrahydrofolate.

It belongs to the Fmt family.

It carries out the reaction L-methionyl-tRNA(fMet) + (6R)-10-formyltetrahydrofolate = N-formyl-L-methionyl-tRNA(fMet) + (6S)-5,6,7,8-tetrahydrofolate + H(+). Its function is as follows. Attaches a formyl group to the free amino group of methionyl-tRNA(fMet). The formyl group appears to play a dual role in the initiator identity of N-formylmethionyl-tRNA by promoting its recognition by IF2 and preventing the misappropriation of this tRNA by the elongation apparatus. The chain is Methionyl-tRNA formyltransferase from Variovorax paradoxus (strain S110).